Consider the following 687-residue polypeptide: Fork-head transcriptional regulator 2 (687 aa).

A disordered region spans residues 1–23; that stretch reads MSAQFITPKKRPHSPLDSNELLP. In terms of domain architecture, FHA spans 82 to 146; that stretch reads VSIGRNIELS…NGARIDGQKV (65 aa). Residues 226–241 are compositionally biased toward polar residues; that stretch reads SPSSISANSLQSNLDQ. The disordered stretch occupies residues 226–246; it reads SPSSISANSLQSNLDQDLSKE. A DNA-binding region (fork-head) is located at residues 252-350; the sequence is KPPYSYATMI…SDGTISKTRR (99 aa). 3 disordered regions span residues 385–449, 472–569, and 584–687; these read AASI…RYTP, QLGR…IGLN, and PERG…MIDS. Residues 389 to 410 are compositionally biased toward low complexity; the sequence is PQQQKQQQQQQKRPPQQQNSQP. Polar residues predominate over residues 411 to 442; that stretch reads HLSQPHYTIPSNPMQTNSMGYIPQSNIYNMSN. The span at 472-490 shows a compositional bias: low complexity; sequence QLGRPQGQLGQPMMQPQQQ. The span at 491–540 shows a compositional bias: polar residues; it reads SYTSSNIKTEPSSPKRNPSISNNTPKMAKGTVSTESHSRSTSYTTTQLHE. Composition is skewed to low complexity over residues 542–563 and 589–624; these read SNFN…TTTN and KGNP…PNTN. Over residues 625–659 the composition is skewed to polar residues; sequence QSSPAFWNFVQFSTPNGQSPVRKSSEEVGNNSPTL. The Nuclear localization signal motif lies at 663–670; sequence IKREREND.

The protein resides in the nucleus. Functionally, transcription factor required for the morphogenesis of true hyphal as well as yeast cells. Contributes to virulence. This is Fork-head transcriptional regulator 2 (FKH2) from Candida albicans (strain SC5314 / ATCC MYA-2876) (Yeast).